The chain runs to 791 residues: Cytochrome c oxidase polypeptide I+III (791 aa).

A COX1 region spans residues 1-473; the sequence is MAITAKPKAG…LLSTIGAYIL (473 aa). A helical membrane pass occupies residues 29–49; it reads LMYTATAFFAFALAGVFSLLI. H73 is a Fe(II)-heme a binding site. A run of 17 helical transmembrane segments spans residues 78–98, 111–131, 155–175, 201–221, 244–264, 282–302, 312–332, 347–367, 381–401, 423–443, 464–484, 566–586, 617–637, 657–677, 691–711, 729–749, and 771–791; these read LFFF…VPLM, AFSY…YFFP, FYLA…ANFV, ASVL…LVLL, FFWF…LGIL, MVWA…HHMF, IAFA…LFNI, LYWV…GVML, FVVA…AFAG, FWLF…LGYL, LLST…IYTM, FAFF…WVFL, AWMG…ILIA, LWLA…VHFA, FGLL…SWEF, FFTI…GLIL, and SMYW…FYVW. The Cu cation site is built by H250, Y254, H299, and H300. Positions 250-254 form a cross-link, 1'-histidyl-3'-tyrosine (His-Tyr); that stretch reads HPTVY. H385 is a heme a3 binding site. A Fe(II)-heme a-binding site is contributed by H387. The COX3 stretch occupies residues 545–791; that stretch reads DPAHIHLPNS…LVIVTIFYVW (247 aa).

This sequence in the N-terminal section; belongs to the heme-copper respiratory oxidase family. It in the C-terminal section; belongs to the cytochrome c oxidase subunit 3 family. Possibly a heterodimer of A-protein (contains: cytochrome c oxidase subunits I and III) and subunit II. The A-protein could also present a precursor form of subunits I and III. Cu(2+) serves as cofactor. It depends on heme as a cofactor.

The protein localises to the cell membrane. The enzyme catalyses 4 Fe(II)-[cytochrome c] + O2 + 8 H(+)(in) = 4 Fe(III)-[cytochrome c] + 2 H2O + 4 H(+)(out). It functions in the pathway energy metabolism; oxidative phosphorylation. Its function is as follows. Cytochrome c oxidase is the component of the respiratory chain that catalyzes the reduction of oxygen to water. Subunits 1-3 form the functional core of the enzyme complex. Co I is the catalytic subunit of the enzyme. Electrons originating in cytochrome c are transferred via the copper A center of subunit 2 and heme a of subunit 1 to the bimetallic center formed by heme a3 and copper B. This cytochrome c oxidase shows proton pump activity across the membrane in addition to the electron transfer. This Thermus thermophilus (strain ATCC 27634 / DSM 579 / HB8) protein is Cytochrome c oxidase polypeptide I+III (caaA).